The chain runs to 372 residues: F-box/kelch-repeat protein At2g44630 (372 aa).

Polar residues predominate over residues 1-13 (MSNADEPPQKTNQ). The tract at residues 1 to 21 (MSNADEPPQKTNQPPSSSLTP) is disordered. Residues 21–67 (PPSLFSLPVDIVLNILALVPKRYYPILCCVSKSLRSLIRSPEIHKTR) enclose the F-box domain. Kelch repeat units follow at residues 136–181 (EIYC…LVGG) and 183–228 (IYVI…SVSL).

This Arabidopsis thaliana (Mouse-ear cress) protein is F-box/kelch-repeat protein At2g44630.